We begin with the raw amino-acid sequence, 557 residues long: Potassium-transporting ATPase potassium-binding subunit (557 aa).

The next 12 membrane-spanning stretches (helical) occupy residues 5–25, 63–83, 132–152, 170–190, 253–273, 283–303, 329–349, 356–376, 379–399, 416–436, 484–504, and 526–546; these read GFLLIATFLLVLMVLARPLGS, LCAILGLNMLGLAVLFFMLLG, GLTVQNFLSAASGIAVIFALI, LLRITLWVLVPVALLIALFFI, FVQMLAIFLIPTALCFAFGEV, LLWAMSVIFVICVGVVMWAEV, VLVSSLFAVVTTAASCGAVIA, ALGGMVPMWLMQIGEVVFGGV, GLYGMMLFVLLAVFIAGLMIG, LTALAILVTPTLVLMGAALAM, LLAFCMFVGRFGVIIPVMAIA, and LFVGLLIGTVLLVGALTFIPA.

The protein belongs to the KdpA family. In terms of assembly, the system is composed of three essential subunits: KdpA, KdpB and KdpC.

The protein resides in the cell inner membrane. Its function is as follows. Part of the high-affinity ATP-driven potassium transport (or Kdp) system, which catalyzes the hydrolysis of ATP coupled with the electrogenic transport of potassium into the cytoplasm. This subunit binds the periplasmic potassium ions and delivers the ions to the membrane domain of KdpB through an intramembrane tunnel. The sequence is that of Potassium-transporting ATPase potassium-binding subunit from Escherichia coli O17:K52:H18 (strain UMN026 / ExPEC).